Reading from the N-terminus, the 67-residue chain is Protein AaeX (67 aa).

2 helical membrane passes run 3–23 (LFPVIVIFGLSFPPIFFELLL) and 43–63 (FVWHPALFNTALYCCLFYLLS).

Belongs to the AaeX family.

The protein resides in the cell membrane. The polypeptide is Protein AaeX (Cronobacter sakazakii (strain ATCC BAA-894) (Enterobacter sakazakii)).